Reading from the N-terminus, the 180-residue chain is ADP-ribosylation factor 5 (180 aa).

Gly2 carries N-myristoyl glycine lipidation. Residues 24–31, 67–71, and 126–129 contribute to the GTP site; these read GLDAAGKT, DVGGQ, and NKQD.

The protein belongs to the small GTPase superfamily. Arf family. As to quaternary structure, interacts (when activated) with GGA1, GGA2 and GGA3; the interaction is required for proper subcellular location of GGA1, GGA2 and GGA3. Binds ASAP2. Interacts with NCS1/FREQ at the Golgi complex. Interacts with RAB11FIP3 and RAB11FIP4.

Its subcellular location is the golgi apparatus. The protein localises to the cytoplasm. It localises to the perinuclear region. It is found in the membrane. The protein resides in the trans-Golgi network membrane. Functionally, GTP-binding protein involved in protein trafficking; may modulate vesicle budding and uncoating within the Golgi apparatus. Its function is as follows. (Microbial infection) Functions as an allosteric activator of the cholera toxin catalytic subunit, an ADP-ribosyltransferase. This Homo sapiens (Human) protein is ADP-ribosylation factor 5 (ARF5).